A 502-amino-acid polypeptide reads, in one-letter code: Lysine--tRNA ligase (502 aa).

The Mg(2+) site is built by E413 and E420.

This sequence belongs to the class-II aminoacyl-tRNA synthetase family. Homodimer. It depends on Mg(2+) as a cofactor.

Its subcellular location is the cytoplasm. It carries out the reaction tRNA(Lys) + L-lysine + ATP = L-lysyl-tRNA(Lys) + AMP + diphosphate. This chain is Lysine--tRNA ligase (lysS), found in Haemophilus influenzae (strain ATCC 51907 / DSM 11121 / KW20 / Rd).